The sequence spans 302 residues: Vomeronasal type-1 receptor 48 (302 aa).

Over 1-16 the chain is Extracellular; that stretch reads MNENSRLHTHSNIRNT. The helical transmembrane segment at 17-37 threads the bilayer; it reads FFSEIGIGISGNSFLLLFHII. Over 38–49 the chain is Cytoplasmic; it reads KFFRGHRPRLTD. Residues 50-70 traverse the membrane as a helical segment; sequence LPIGLLSLIHLLMLLVAAVIA. The Extracellular portion of the chain corresponds to 71–91; that stretch reads TDIFISWRGWNDIICKFLVYL. C85 and C172 are joined by a disulfide. The chain crosses the membrane as a helical span at residues 92–114; it reads YRSLRGLSLCTTSMLSVLQAIIL. At 115–131 the chain is on the cytoplasmic side; that stretch reads SPRSYCLAKFKRKSSHN. The helical transmembrane segment at 132–152 threads the bilayer; the sequence is ISCAIIFLSVLYMSISSHLLI. Residues 153 to 193 are Extracellular-facing; sequence SITATPNLTMNDFLYVSQSCSLLPLSYLMQSIYSTLLVLRE. N159 carries an N-linked (GlcNAc...) asparagine glycan. A helical transmembrane segment spans residues 194 to 214; the sequence is VFLIGLMVLSTSYMVALLYMH. Residues 215–238 are Cytoplasmic-facing; that stretch reads RKQAQNLQGTSLSLKASAEQRATQ. A helical transmembrane segment spans residues 239-259; that stretch reads TILMLMTFFVLMSIFDSIVSC. Residues 260 to 269 are Extracellular-facing; that stretch reads SRTMFLDDPT. A helical membrane pass occupies residues 270–290; the sequence is SYSIHIFVMHIYATVSPFVFI. The Cytoplasmic portion of the chain corresponds to 291 to 302; sequence STEKHIVNILRG.

The protein belongs to the G-protein coupled receptor 1 family.

It localises to the cell membrane. Functionally, putative pheromone receptor implicated in the regulation of social and reproductive behavior. The protein is Vomeronasal type-1 receptor 48 (Vmn1r48) of Mus musculus (Mouse).